Here is a 207-residue protein sequence, read N- to C-terminus: Large ribosomal subunit protein uL3 (207 aa).

The disordered stretch occupies residues 129-152 (AGGPAGHGSRFQRHPGSIGSNTTP).

This sequence belongs to the universal ribosomal protein uL3 family. Part of the 50S ribosomal subunit. Forms a cluster with proteins L14 and L19.

Functionally, one of the primary rRNA binding proteins, it binds directly near the 3'-end of the 23S rRNA, where it nucleates assembly of the 50S subunit. The polypeptide is Large ribosomal subunit protein uL3 (Leptospira biflexa serovar Patoc (strain Patoc 1 / ATCC 23582 / Paris)).